A 127-amino-acid chain; its full sequence is Mini-ribonuclease 3-like protein (127 aa).

The active site involves aspartate 19.

The protein belongs to the MrnC RNase family.

Might be a ribonuclease involved in RNA processing. The sequence is that of Mini-ribonuclease 3-like protein (mrnCL) from Ilyobacter polytropus (strain ATCC 51220 / DSM 2926 / LMG 16218 / CuHBu1).